A 403-amino-acid chain; its full sequence is Histidine--tRNA ligase (403 aa).

It belongs to the class-II aminoacyl-tRNA synthetase family. In terms of assembly, homodimer.

The protein localises to the cytoplasm. The enzyme catalyses tRNA(His) + L-histidine + ATP = L-histidyl-tRNA(His) + AMP + diphosphate + H(+). The chain is Histidine--tRNA ligase (hisS) from Aquifex aeolicus (strain VF5).